Reading from the N-terminus, the 389-residue chain is Mannitol-1-phosphate 5-dehydrogenase (389 aa).

5–16 (AVHFGAGNIGRG) provides a ligand contact to NAD(+). The active site involves K215.

This sequence belongs to the mannitol dehydrogenase family. Monomer.

The catalysed reaction is D-mannitol 1-phosphate + NAD(+) = beta-D-fructose 6-phosphate + NADH + H(+). Its function is as follows. Catalyzes the NAD(H)-dependent interconversion of D-fructose 6-phosphate and D-mannitol 1-phosphate in the mannitol metabolic pathway. This chain is Mannitol-1-phosphate 5-dehydrogenase, found in Sclerotinia sclerotiorum (strain ATCC 18683 / 1980 / Ss-1) (White mold).